The primary structure comprises 830 residues: G-type lectin S-receptor-like serine/threonine-protein kinase SD1-13 (830 aa).

Residues 1–21 form the signal peptide; sequence MGCLLILLLTLICFSLRLCLA. Residues 22 to 145 enclose the Bulb-type lectin domain; that stretch reads TDVITFSSEF…TNTGDEILWE (124 aa). Residues 22–434 lie on the Extracellular side of the membrane; it reads TDVITFSSEF…SEFKKRTNRS (413 aa). N-linked (GlcNAc...) asparagine glycosylation is found at Asn40, Asn53, and Asn82. The 39-residue stretch at 283 to 321 folds into the EGF-like; atypical domain; that stretch reads PSTKCDTYATCGQFASCRFNPGSTPPCMCIRGFKPQSYA. 2 disulfides stabilise this stretch: Cys287/Cys299 and Cys293/Cys309. 3 N-linked (GlcNAc...) asparagine glycosylation sites follow: Asn327, Asn384, and Asn432. The PAN domain maps to 340 to 423; sequence CESRDNNDGS…TGVVFYIRLA (84 aa). Disulfide bonds link Cys377/Cys398 and Cys381/Cys387. A helical membrane pass occupies residues 435–455; that stretch reads IVITVTLLVGAFLFAGTVVLA. The Cytoplasmic portion of the chain corresponds to 456-830; that stretch reads LWKIAKHREK…NVSLTKITGR (375 aa). A Protein kinase domain is found at 512 to 798; the sequence is FSITNKLGQG…NLPEPKQPAF (287 aa). ATP is bound by residues 518–526 and Lys540; that span reads LGQGGFGAV. Thr545 is subject to Phosphothreonine. Phosphoserine is present on residues Ser546 and Ser561. Residues 601-618 are caM-binding; that stretch reads VKQRLLDWKTRFNIIDGI. Asp637 acts as the Proton acceptor in catalysis. Phosphoserine occurs at positions 641, 654, and 670. At Thr671 the chain carries Phosphothreonine. Ser714, Ser715, Ser726, Ser805, Ser809, Ser810, Ser813, Ser818, and Ser823 each carry phosphoserine. The segment at 789–830 is disordered; it reads NLPEPKQPAFIPRRGTSEVESSGQSDPRASINNVSLTKITGR. A compositionally biased stretch (polar residues) spans 806–830; that stretch reads EVESSGQSDPRASINNVSLTKITGR. Thr825 and Thr828 each carry phosphothreonine.

The protein belongs to the protein kinase superfamily. Ser/Thr protein kinase family. In terms of assembly, interacts with PUB9, PUB13 and PUB14. Binds to calmodulin (CaM) in a Ca(2+)-dependent manner. Post-translationally, autophosphorylated. In terms of tissue distribution, mostly expressed in rosette leaves, and, to a lower extent, in cauline leaves and stems.

The protein resides in the cell membrane. It carries out the reaction L-seryl-[protein] + ATP = O-phospho-L-seryl-[protein] + ADP + H(+). It catalyses the reaction L-threonyl-[protein] + ATP = O-phospho-L-threonyl-[protein] + ADP + H(+). Receptor-like serine/threonine-protein kinase that represses the disease resistance signaling pathway triggered in response to bacterial pathogen such as Pseudomonas syringae pv. tomato. The polypeptide is G-type lectin S-receptor-like serine/threonine-protein kinase SD1-13 (SD113) (Arabidopsis thaliana (Mouse-ear cress)).